A 473-amino-acid chain; its full sequence is MPASVVLQQPDIPIAAIATPVGVGALAIVRMSGKGVFGIADRAFRKKSGKAFSFEAAEGFTAHVGTLFDGEGMVDEVVALVFRAPSSFTMEDMVEFTCHGGPVVVRRVLAALLDGGCRLAEPGEFTRRAFLNGRIDLLQAEAIGEMIHARTDGAFRTAVTQMQGGLSRRLLEMREGLLQSCALLELELDFSEEDVEFQSREELRGEVIRLQTELSGLVDSYQHGRLLSEGVSTVIAGRPNAGKSTLLNKLLGEERSIVSHMPGTTRDYIEECFVYDKTMFRLTDTAGLRESEEDVEHEGIERSYRKISEADLILYMLDVSGEGFREEAVSAAALCAGHPEARMILLANKTDLVKDSALRIAALETAAGSPVVPMAARSGEGIEELKLLMASMVEGLDKLHEASVLVTSLRHYEALRNASDALHNALGLIEGGEATELIAFELRSALDYVGEITGKVVSEELLNTIFGQFCIGK.

Residues Arg-30, Glu-95, and Arg-134 each contribute to the (6S)-5-formyl-5,6,7,8-tetrahydrofolate site. The region spanning 230–394 is the TrmE-type G domain; that stretch reads GVSTVIAGRP…LKLLMASMVE (165 aa). GTP contacts are provided by residues 240 to 245, 259 to 265, and 284 to 287; these read NAGKST, SHMPGTT, and DTAG. Mg(2+) contacts are provided by Ser-244 and Thr-265. Lys-473 lines the (6S)-5-formyl-5,6,7,8-tetrahydrofolate pocket.

The protein belongs to the TRAFAC class TrmE-Era-EngA-EngB-Septin-like GTPase superfamily. TrmE GTPase family. Homodimer. Heterotetramer of two MnmE and two MnmG subunits. K(+) is required as a cofactor.

The protein localises to the cytoplasm. In terms of biological role, exhibits a very high intrinsic GTPase hydrolysis rate. Involved in the addition of a carboxymethylaminomethyl (cmnm) group at the wobble position (U34) of certain tRNAs, forming tRNA-cmnm(5)s(2)U34. This is tRNA modification GTPase MnmE from Chlorobium luteolum (strain DSM 273 / BCRC 81028 / 2530) (Pelodictyon luteolum).